The chain runs to 298 residues: Inosose dehydratase (298 aa).

It belongs to the IolE/MocC family. Requires glutathione as cofactor. The cofactor is Co(2+). Mn(2+) is required as a cofactor.

It carries out the reaction scyllo-inosose = 3D-3,5/4-trihydroxycyclohexane-1,2-dione + H2O. Its function is as follows. Catalyzes the dehydration of inosose (2-keto-myo-inositol, 2KMI or 2,4,6/3,5-pentahydroxycyclohexanone) to 3D-(3,5/4)-trihydroxycyclohexane-1,2-dione (D-2,3-diketo-4-deoxy-epi-inositol). The sequence is that of Inosose dehydratase from Glaesserella parasuis serovar 5 (strain SH0165) (Haemophilus parasuis).